The following is a 790-amino-acid chain: Kinesin-like protein KIN-14D (790 aa).

Disordered stretches follow at residues 1–56 and 116–139; these read MPLR…DVGS and DKEN…LDAK. The globular stretch occupies residues 1 to 66; that stretch reads MPLRNQNRAP…TEECGKVEFT (66 aa). A compositionally biased stretch (basic and acidic residues) spans 16 to 33; the sequence is VKKEALSSIPFDKRRKET. Polar residues predominate over residues 34 to 55; it reads QGTGRRQVLSTVNRQDANSDVG. Coiled-coil stretches lie at residues 117–316 and 347–426; these read KENL…HVVQ and SLEE…LELK. Basic and acidic residues predominate over residues 127–139; that stretch reads AEKRYSDKELDAK. Positions 428–769 constitute a Kinesin motor domain; that stretch reads NIRVFCRVRP…LRFAARVNAC (342 aa). 513 to 520 contacts ATP; it reads GQTGSGKT.

The protein belongs to the TRAFAC class myosin-kinesin ATPase superfamily. Kinesin family. KIN-14 subfamily. In terms of tissue distribution, slightly expressed in anther lobes with pollen mother cells at anther stage 5. Strongly expressed at anther stage 6 in the tapetum and meiotic cells. Also detected in the gynoecium and the ovule.

It localises to the cytoplasm. Its subcellular location is the cytoskeleton. The protein resides in the phragmoplast. Functionally, kinesin that supports microtubule movement in an ATP-dependent manner and that functions as a minus-end directed motor as well as a plus-end tracking protein. During mitosis, is involved in early spindle assembly. Participates in the capture of antiparallel interpolar microtubules and helps in generating force to coalign microtubules. The sequence is that of Kinesin-like protein KIN-14D from Arabidopsis thaliana (Mouse-ear cress).